The sequence spans 239 residues: MPLLHRTIIFLQLLGTISSNYNAFFAIMVTNPTVVQQVNQIEVNLTQSNPQFVKFVHNISHLHIKLNTVELNETRLPIVQKFLKELPKAMCNVSYSIPALFEGTAVMANTTLYGKVNPMSSSVISSVHQKIFSLLNNTEIPSVDVHDIFHPRMNIVELDNRKHEDLLQIMSNRTGDFKLNTGDFIKEIVLFNSTESGSFHEEIGRAVLAPCSNFTLLRFKKPELISNRVPIFPLEMDFK.

The first 19 residues, 1-19 (MPLLHRTIIFLQLLGTISS), serve as a signal peptide directing secretion. 9 N-linked (GlcNAc...) asparagine glycosylation sites follow: Asn44, Asn58, Asn72, Asn92, Asn109, Asn136, Asn172, Asn192, and Asn213.

Its subcellular location is the secreted. This is an uncharacterized protein from Caenorhabditis elegans.